Here is a 373-residue protein sequence, read N- to C-terminus: MNENCYKRVVIKLGTSLLTGGTGKLDHERMADLCRQIAELTRLGTEIVIVSSGAIAAGRSKMGIRHIPKDVPFKQVLAAIGQSQLMNYYDQLFSPHGLTVAQGLLTKSDLSDRSGYLNARNTLLALMELGIITIVNENDVVAIDEIQQAKFGDNDNLSAMVANLIEADLLLILTNIRGLYTSDPTLHPEATLITEVKEITEELEQLAAGSSNKLGTGGMVTKLEAARLATSSGVTAIIADGHIPDIILKLANGENEGTRFIPSLHKPDSRQRWMMSGLCTRGSICVDDGAAKALRENQKSLLAAGVQQAEGKFGRGDIVKLTDSHGKRLGYGITNYSSDDISKIKGLHSQELNAVLGGNQGPEVIHRNNLVVI.

Lysine 12 lines the ATP pocket. 3 residues coordinate substrate: serine 52, aspartate 139, and asparagine 154. Residue 216-222 participates in ATP binding; sequence TGGMVTK. The PUA domain occupies 281 to 359; that stretch reads RGSICVDDGA…QELNAVLGGN (79 aa).

The protein belongs to the glutamate 5-kinase family.

The protein localises to the cytoplasm. The catalysed reaction is L-glutamate + ATP = L-glutamyl 5-phosphate + ADP. It participates in amino-acid biosynthesis; L-proline biosynthesis; L-glutamate 5-semialdehyde from L-glutamate: step 1/2. In terms of biological role, catalyzes the transfer of a phosphate group to glutamate to form L-glutamate 5-phosphate. The sequence is that of Glutamate 5-kinase from Dehalococcoides mccartyi (strain CBDB1).